The primary structure comprises 364 residues: Lipoyl synthase, mitochondrial (364 aa).

The segment at 34–53 (PNFQDFIQNSDNSKDDFENY) is disordered. [4Fe-4S] cluster-binding residues include Cys-99, Cys-104, Cys-110, Cys-130, Cys-134, Cys-137, and Ser-345. In terms of domain architecture, Radical SAM core spans 115–334 (EHGTQTATIM…EQRGNELGFL (220 aa)).

This sequence belongs to the radical SAM superfamily. Lipoyl synthase family. [4Fe-4S] cluster serves as cofactor.

Its subcellular location is the mitochondrion. The enzyme catalyses [[Fe-S] cluster scaffold protein carrying a second [4Fe-4S](2+) cluster] + N(6)-octanoyl-L-lysyl-[protein] + 2 oxidized [2Fe-2S]-[ferredoxin] + 2 S-adenosyl-L-methionine + 4 H(+) = [[Fe-S] cluster scaffold protein] + N(6)-[(R)-dihydrolipoyl]-L-lysyl-[protein] + 4 Fe(3+) + 2 hydrogen sulfide + 2 5'-deoxyadenosine + 2 L-methionine + 2 reduced [2Fe-2S]-[ferredoxin]. The protein operates within protein modification; protein lipoylation via endogenous pathway; protein N(6)-(lipoyl)lysine from octanoyl-[acyl-carrier-protein]: step 2/2. Its function is as follows. Catalyzes the radical-mediated insertion of two sulfur atoms into the C-6 and C-8 positions of the octanoyl moiety bound to the lipoyl domains of lipoate-dependent enzymes, thereby converting the octanoylated domains into lipoylated derivatives. The chain is Lipoyl synthase, mitochondrial from Drosophila grimshawi (Hawaiian fruit fly).